A 152-amino-acid chain; its full sequence is Large-conductance mechanosensitive channel (152 aa).

Transmembrane regions (helical) follow at residues 14–34 (VIDL…VKSL) and 84–104 (VGQF…VFLL).

It belongs to the MscL family. In terms of assembly, homopentamer.

It is found in the cell inner membrane. Channel that opens in response to stretch forces in the membrane lipid bilayer. May participate in the regulation of osmotic pressure changes within the cell. In Laribacter hongkongensis (strain HLHK9), this protein is Large-conductance mechanosensitive channel.